The following is a 305-amino-acid chain: Probable aspartoacylase (305 aa).

Residues His-13 and Glu-16 each contribute to the Zn(2+) site. Substrate contacts are provided by residues Arg-55 and Asn-62–Arg-63. Residue His-105 coordinates Zn(2+). Glu-163 and Tyr-273 together coordinate substrate.

This sequence belongs to the AspA/AstE family. Aspartoacylase subfamily. Zn(2+) is required as a cofactor.

It catalyses the reaction an N-acyl-L-aspartate + H2O = a carboxylate + L-aspartate. This Prochlorococcus marinus (strain NATL2A) protein is Probable aspartoacylase.